We begin with the raw amino-acid sequence, 540 residues long: Ribonuclease Y (540 aa).

A helical transmembrane segment spans residues 4–24 (TILVPVAVAIVSVLVGGCAGY). One can recognise a KH domain in the interval 230–293 (TVSVVNLPND…EIAKRALERL (64 aa)). Residues 356-449 (VLSHSIEVGK…VVAADTISSA (94 aa)) enclose the HD domain.

It belongs to the RNase Y family.

The protein resides in the cell membrane. Its function is as follows. Endoribonuclease that initiates mRNA decay. This Lactobacillus gasseri (strain ATCC 33323 / DSM 20243 / BCRC 14619 / CIP 102991 / JCM 1131 / KCTC 3163 / NCIMB 11718 / NCTC 13722 / AM63) protein is Ribonuclease Y.